The chain runs to 254 residues: Polysaccharide deacetylase domain-containing protein ECU11_0510 (254 aa).

The NodB homology domain occupies 26–210 (GMIAINFVDG…IGKDKGYRFV (185 aa)).

This chain is Polysaccharide deacetylase domain-containing protein ECU11_0510, found in Encephalitozoon cuniculi (strain GB-M1) (Microsporidian parasite).